Reading from the N-terminus, the 91-residue chain is DNA-directed RNA polymerase subunit Rpo11 (91 aa).

The protein belongs to the archaeal Rpo11/eukaryotic RPB11/RPC19 RNA polymerase subunit family. As to quaternary structure, part of the RNA polymerase complex.

The protein resides in the cytoplasm. It catalyses the reaction RNA(n) + a ribonucleoside 5'-triphosphate = RNA(n+1) + diphosphate. Functionally, DNA-dependent RNA polymerase (RNAP) catalyzes the transcription of DNA into RNA using the four ribonucleoside triphosphates as substrates. The polypeptide is DNA-directed RNA polymerase subunit Rpo11 (Methanococcoides burtonii (strain DSM 6242 / NBRC 107633 / OCM 468 / ACE-M)).